Reading from the N-terminus, the 179-residue chain is Large ribosomal subunit protein uL5 (179 aa).

It belongs to the universal ribosomal protein uL5 family. In terms of assembly, part of the 50S ribosomal subunit; part of the 5S rRNA/L5/L18/L25 subcomplex. Contacts the 5S rRNA and the P site tRNA. Forms a bridge to the 30S subunit in the 70S ribosome.

Functionally, this is one of the proteins that bind and probably mediate the attachment of the 5S RNA into the large ribosomal subunit, where it forms part of the central protuberance. In the 70S ribosome it contacts protein S13 of the 30S subunit (bridge B1b), connecting the 2 subunits; this bridge is implicated in subunit movement. Contacts the P site tRNA; the 5S rRNA and some of its associated proteins might help stabilize positioning of ribosome-bound tRNAs. This Bacillus velezensis (strain DSM 23117 / BGSC 10A6 / LMG 26770 / FZB42) (Bacillus amyloliquefaciens subsp. plantarum) protein is Large ribosomal subunit protein uL5.